The chain runs to 427 residues: Zinc finger protein DPF3 (427 aa).

The segment at Leu182–Asp244 is disordered. Positions Asn184–Glu199 are enriched in acidic residues. Basic and acidic residues predominate over residues Arg233–Asp244. A C2H2-type zinc finger spans residues Tyr247 to His270. The tract at residues Ala272–Pro301 is disordered. The segment covering Ala279–Lys296 has biased composition (basic and acidic residues). 2 consecutive PHD-type zinc fingers follow at residues Asn308 to Cys368 and Cys365 to Leu415.

This sequence belongs to the requiem/DPF family. In terms of assembly, component of the BAF complex. Interacts with acetylated histones H3 and H4. Component of neuron-specific chromatin remodeling complex (nBAF complex), a subfamily of ATP-dependent SWI/SNF chromatin remodeling complexes. In terms of tissue distribution, expressed in the heart and somites.

Its subcellular location is the nucleus. In terms of biological role, muscle-specific component of the BAF complex, a multiprotein complex involved in transcriptional activation and repression of select genes by chromatin remodeling (alteration of DNA-nucleosome topology). Specifically binds acetylated lysines on histone 3 and 4. In the complex, it acts as a tissue-specific anchor between histone acetylations and methylations and chromatin remodeling. It thereby probably plays an essential role in heart and skeletal muscle development. Belongs to the neuron-specific chromatin remodeling complex (nBAF complex) and plays a role in neural development. This is Zinc finger protein DPF3 (DPF3) from Gallus gallus (Chicken).